The sequence spans 348 residues: Dihydroorotase (348 aa).

2 residues coordinate Zn(2+): H17 and H19. Substrate is bound by residues 19-21 (HLR) and N45. Zn(2+) is bound by residues K103, H140, and H178. The residue at position 103 (K103) is an N6-carboxylysine. H140 serves as a coordination point for substrate. L223 provides a ligand contact to substrate. D251 serves as a coordination point for Zn(2+). D251 is an active-site residue. Residues H255 and A267 each contribute to the substrate site.

Belongs to the metallo-dependent hydrolases superfamily. DHOase family. Class II DHOase subfamily. In terms of assembly, homodimer. Zn(2+) serves as cofactor.

The catalysed reaction is (S)-dihydroorotate + H2O = N-carbamoyl-L-aspartate + H(+). It functions in the pathway pyrimidine metabolism; UMP biosynthesis via de novo pathway; (S)-dihydroorotate from bicarbonate: step 3/3. Its function is as follows. Catalyzes the reversible cyclization of carbamoyl aspartate to dihydroorotate. The sequence is that of Dihydroorotase from Escherichia coli O157:H7.